The primary structure comprises 200 residues: ATP synthase subunit b (200 aa).

A helical transmembrane segment spans residues 12–32; the sequence is ILSGLAVAVAILVPVLALASG.

The protein belongs to the ATPase B chain family. F-type ATPases have 2 components, F(1) - the catalytic core - and F(0) - the membrane proton channel. F(1) has five subunits: alpha(3), beta(3), gamma(1), delta(1), epsilon(1). F(0) has three main subunits: a(1), b(2) and c(10-14). The alpha and beta chains form an alternating ring which encloses part of the gamma chain. F(1) is attached to F(0) by a central stalk formed by the gamma and epsilon chains, while a peripheral stalk is formed by the delta and b chains.

Its subcellular location is the cell inner membrane. Its function is as follows. F(1)F(0) ATP synthase produces ATP from ADP in the presence of a proton or sodium gradient. F-type ATPases consist of two structural domains, F(1) containing the extramembraneous catalytic core and F(0) containing the membrane proton channel, linked together by a central stalk and a peripheral stalk. During catalysis, ATP synthesis in the catalytic domain of F(1) is coupled via a rotary mechanism of the central stalk subunits to proton translocation. Component of the F(0) channel, it forms part of the peripheral stalk, linking F(1) to F(0). This Trichlorobacter lovleyi (strain ATCC BAA-1151 / DSM 17278 / SZ) (Geobacter lovleyi) protein is ATP synthase subunit b.